The sequence spans 207 residues: Acyl-homoserine-lactone synthase (207 aa).

The protein belongs to the autoinducer synthase family.

The enzyme catalyses a fatty acyl-[ACP] + S-adenosyl-L-methionine = an N-acyl-L-homoserine lactone + S-methyl-5'-thioadenosine + holo-[ACP] + H(+). Functionally, required for the synthesis of N-butanoyl-L-homoserine lactone (BHL), an autoinducer molecule which binds to AsaR. This Aeromonas salmonicida protein is Acyl-homoserine-lactone synthase (asaI).